A 247-amino-acid chain; its full sequence is RNA polymerase sigma factor FliA (247 aa).

Residues 22 to 94 (LIQRYAPLVK…MLDEVRKGDW (73 aa)) form a sigma-70 factor domain-2 region. The Interaction with polymerase core subunit RpoC signature appears at 49–52 (DLMQ). Residues 102–171 (NTRMVTDAIR…GLPEDTSLSH (70 aa)) form a sigma-70 factor domain-3 region. The segment at 190–238 (AIAKLPERERLVLALYYDEELNLKEIGEVLGVSESRVSQLHSQCAARLR) is sigma-70 factor domain-4. Positions 212–231 (LKEIGEVLGVSESRVSQLHS) form a DNA-binding region, H-T-H motif.

Belongs to the sigma-70 factor family. FliA subfamily.

The protein localises to the cytoplasm. In terms of biological role, sigma factors are initiation factors that promote the attachment of RNA polymerase to specific initiation sites and are then released. This sigma factor controls the expression of flagella-related genes. Required for the flagellin gene (fliC) expression. In Pseudomonas aeruginosa (strain ATCC 15692 / DSM 22644 / CIP 104116 / JCM 14847 / LMG 12228 / 1C / PRS 101 / PAO1), this protein is RNA polymerase sigma factor FliA.